The chain runs to 233 residues: Glyceraldehyde 3-phosphate phosphatase (233 aa).

It belongs to the HAD-like hydrolase superfamily. It depends on Mg(2+) as a cofactor.

In terms of biological role, catalyzes the dephosphorylation of D,L-glyceraldehyde 3-phosphate in vitro. This Methanopyrus kandleri (strain AV19 / DSM 6324 / JCM 9639 / NBRC 100938) protein is Glyceraldehyde 3-phosphate phosphatase.